The sequence spans 482 residues: MSEQGITVSKSEDFSEWYSQVLSKAGLVDLRYNVQGFVVHKPWLMRIIKAIYRFFEEELEKTGHEPVLFPLVIPEENFEKEKEHVEGFKPEVFWVTQAGDEKLERRLALRPTSETAFYYMYSYWIQSWRDLPLKLYQSVSVYRNEKNTRPLIRGREFLWIEAHDAFATHEEALNQIREDMENSRKVIWEKLGIPFLFLRRPPWDKFSGAEDTYAADTIMPDGRVLQISSTHDLGQRFAKAFNVTFLDKDGKRKYVWQTCYGPGIWRITAALIAIHGDDKGLVLPMNVAPIQVVIVPIYYKESDKERVLEKCRKLEAMIREAGYRVYLDAREEYTPGWKFNDWELKGVPVRLEVGVREVETGTVTVFRRDLRVKEKVADSELISHIRKLENDILEELKRRAKEFFESRIVTATRREEVEEALRSGKMVKMPFCGREECADDLKEATDGGKVRGTEIDFKEGDYGRCAWCGAPARLIVYVAKSY.

Belongs to the class-II aminoacyl-tRNA synthetase family. ProS type 3 subfamily. In terms of assembly, homodimer.

It is found in the cytoplasm. It catalyses the reaction tRNA(Pro) + L-proline + ATP = L-prolyl-tRNA(Pro) + AMP + diphosphate. Its function is as follows. Catalyzes the attachment of proline to tRNA(Pro) in a two-step reaction: proline is first activated by ATP to form Pro-AMP and then transferred to the acceptor end of tRNA(Pro). In Thermofilum pendens (strain DSM 2475 / Hrk 5), this protein is Proline--tRNA ligase.